A 97-amino-acid polypeptide reads, in one-letter code: Protein RnfH (97 aa).

It belongs to the UPF0125 (RnfH) family.

The sequence is that of Protein RnfH from Aliivibrio salmonicida (strain LFI1238) (Vibrio salmonicida (strain LFI1238)).